The primary structure comprises 146 residues: Small ribosomal subunit protein eS19 (146 aa).

It belongs to the eukaryotic ribosomal protein eS19 family.

The protein is Small ribosomal subunit protein eS19 (RPS19A) of Oryza sativa subsp. japonica (Rice).